A 737-amino-acid chain; its full sequence is SANT and BTB domain regulator of class switch recombination (737 aa).

Residues 21 to 59 (DMILYPLIGIPQTINWETVARLVPGLTPKECVKRFDELK) enclose the SANT domain. Positions 147–255 (MVIHVCDEAK…QCIQYCHKNM (109 aa)) constitute a BTB domain. Residues 555 to 576 (SEEEEYTTGSEVTEDEVGDEEE) are compositionally biased toward acidic residues. The tract at residues 555–618 (SEEEEYTTGS…TLEKSTSRDV (64 aa)) is disordered. Over residues 580-595 (KQRKKEKPKKFTKPPK) the composition is skewed to basic residues. Over residues 604–615 (QKKEKTLEKSTS) the composition is skewed to basic and acidic residues.

The protein belongs to the KIAA1841 family. Homodimer. Interacts (via the BTB domain) with HDAC1 and NCOR2.

Functionally, negatively regulates class switch recombination or isotype switching in splenic B-cells. This is SANT and BTB domain regulator of class switch recombination from Rattus norvegicus (Rat).